Reading from the N-terminus, the 280-residue chain is Thymidylate synthase (280 aa).

R21 serves as a coordination point for dUMP. A (6R)-5,10-methylene-5,6,7,8-tetrahydrofolate-binding site is contributed by H51. 142–143 (RR) is a dUMP binding site. C162 serves as the catalytic Nucleophile. DUMP is bound by residues 182-185 (RSAD), N193, and 223-225 (HLY). (6R)-5,10-methylene-5,6,7,8-tetrahydrofolate is bound at residue D185. A279 contacts (6R)-5,10-methylene-5,6,7,8-tetrahydrofolate.

This sequence belongs to the thymidylate synthase family. Bacterial-type ThyA subfamily. In terms of assembly, homodimer.

The protein localises to the cytoplasm. It catalyses the reaction dUMP + (6R)-5,10-methylene-5,6,7,8-tetrahydrofolate = 7,8-dihydrofolate + dTMP. Its pathway is pyrimidine metabolism; dTTP biosynthesis. Functionally, catalyzes the reductive methylation of 2'-deoxyuridine-5'-monophosphate (dUMP) to 2'-deoxythymidine-5'-monophosphate (dTMP) while utilizing 5,10-methylenetetrahydrofolate (mTHF) as the methyl donor and reductant in the reaction, yielding dihydrofolate (DHF) as a by-product. This enzymatic reaction provides an intracellular de novo source of dTMP, an essential precursor for DNA biosynthesis. In Acinetobacter baumannii (strain AB307-0294), this protein is Thymidylate synthase.